The primary structure comprises 744 residues: Phosphoribosylformylglycinamidine synthase subunit PurL (744 aa).

His-45 is an active-site residue. ATP-binding residues include Tyr-48 and Lys-87. Glu-89 is a Mg(2+) binding site. Residues 90–93 (SHNH) and Arg-112 each bind substrate. His-91 serves as the catalytic Proton acceptor. Asp-113 lines the Mg(2+) pocket. Gln-236 serves as a coordination point for substrate. Residue Asp-264 coordinates Mg(2+). Residue 308–310 (ESQ) participates in substrate binding. 2 residues coordinate ATP: Asn-492 and Gly-529. Asn-530 is a Mg(2+) binding site. Ser-532 contacts substrate.

Belongs to the FGAMS family. As to quaternary structure, monomer. Part of the FGAM synthase complex composed of 1 PurL, 1 PurQ and 2 PurS subunits.

It is found in the cytoplasm. It carries out the reaction N(2)-formyl-N(1)-(5-phospho-beta-D-ribosyl)glycinamide + L-glutamine + ATP + H2O = 2-formamido-N(1)-(5-O-phospho-beta-D-ribosyl)acetamidine + L-glutamate + ADP + phosphate + H(+). Its pathway is purine metabolism; IMP biosynthesis via de novo pathway; 5-amino-1-(5-phospho-D-ribosyl)imidazole from N(2)-formyl-N(1)-(5-phospho-D-ribosyl)glycinamide: step 1/2. Part of the phosphoribosylformylglycinamidine synthase complex involved in the purines biosynthetic pathway. Catalyzes the ATP-dependent conversion of formylglycinamide ribonucleotide (FGAR) and glutamine to yield formylglycinamidine ribonucleotide (FGAM) and glutamate. The FGAM synthase complex is composed of three subunits. PurQ produces an ammonia molecule by converting glutamine to glutamate. PurL transfers the ammonia molecule to FGAR to form FGAM in an ATP-dependent manner. PurS interacts with PurQ and PurL and is thought to assist in the transfer of the ammonia molecule from PurQ to PurL. In Erythrobacter litoralis (strain HTCC2594), this protein is Phosphoribosylformylglycinamidine synthase subunit PurL.